Here is a 396-residue protein sequence, read N- to C-terminus: Ribosomal RNA large subunit methyltransferase I (396 aa).

In terms of domain architecture, PUA spans 2-81 (SVRLVLAKGR…ESIDIAFFSR (80 aa)).

This sequence belongs to the methyltransferase superfamily. RlmI family.

The protein localises to the cytoplasm. The enzyme catalyses cytidine(1962) in 23S rRNA + S-adenosyl-L-methionine = 5-methylcytidine(1962) in 23S rRNA + S-adenosyl-L-homocysteine + H(+). Specifically methylates the cytosine at position 1962 (m5C1962) of 23S rRNA. The sequence is that of Ribosomal RNA large subunit methyltransferase I from Escherichia coli (strain K12 / MC4100 / BW2952).